Here is a 345-residue protein sequence, read N- to C-terminus: Fructose-1,6-bisphosphatase class 1 (345 aa).

Mg(2+) contacts are provided by glutamate 90, aspartate 109, leucine 111, and aspartate 112. Residues 112-115 (DGSS) and asparagine 199 each bind substrate. Residue glutamate 271 participates in Mg(2+) binding.

It belongs to the FBPase class 1 family. As to quaternary structure, homotetramer. It depends on Mg(2+) as a cofactor.

It is found in the cytoplasm. It catalyses the reaction beta-D-fructose 1,6-bisphosphate + H2O = beta-D-fructose 6-phosphate + phosphate. It participates in carbohydrate biosynthesis; Calvin cycle. The polypeptide is Fructose-1,6-bisphosphatase class 1 (Rhodopseudomonas palustris (strain BisB5)).